The following is a 381-amino-acid chain: MYG1 exonuclease (381 aa).

Residues M1–I47 constitute a mitochondrion transit peptide. 2 positions are modified to N6-acetyllysine: K267 and K273.

It belongs to the MYG1 family.

The protein resides in the nucleus. The protein localises to the nucleoplasm. It is found in the mitochondrion matrix. Its subcellular location is the nucleolus. Functionally, 3'-5' RNA exonuclease which cleaves in situ on specific transcripts in both nucleus and mitochondrion. Involved in regulating spatially segregated organellar RNA processing, acts as a coordinator of nucleo-mitochondrial crosstalk. In nucleolus, processes pre-ribosomal RNA involved in ribosome assembly and alters cytoplasmic translation. In mitochondrial matrix, processes 3'-termini of the mito-ribosomal and messenger RNAs and controls translation of mitochondrial proteins. This is MYG1 exonuclease from Rattus norvegicus (Rat).